A 311-amino-acid polypeptide reads, in one-letter code: Olfactory receptor 8G1 (311 aa).

Residues 1–25 lie on the Extracellular side of the membrane; the sequence is MSGENNSSVTEFILAGLSEQPELQL. N-linked (GlcNAc...) asparagine glycans are attached at residues Asn-5 and Asn-6. A helical transmembrane segment spans residues 26–46; it reads PLFLLFLGIYVVTVVGNLGMT. The Cytoplasmic segment spans residues 47–54; that stretch reads TLIWLSSH. Residues 55-75 traverse the membrane as a helical segment; that stretch reads LHTPMYYFLSSLSFIDFCHST. Topologically, residues 76-99 are extracellular; that stretch reads VITPKMLVNFVTEKNIISYPECMT. Cysteines 97 and 189 form a disulfide. The chain crosses the membrane as a helical span at residues 100–120; sequence QLYFFLVFAIAECHMLAAMAY. At 121-139 the chain is on the cytoplasmic side; it reads DRYMAICSPLLYSVIISNK. A helical transmembrane segment spans residues 140 to 160; it reads ACFSLILGVYIIGLVCASVHT. Over 161-197 the chain is Extracellular; the sequence is GCMFRVQFCKFDLINHYFCDLLPLLKLSCSSIYVNKL. A helical transmembrane segment spans residues 198-217; the sequence is LILCVGAFNILVPSLTILCS. Topologically, residues 218-237 are cytoplasmic; it reads YIFIIASILHIRSTEGRSKA. Residues 238-258 form a helical membrane-spanning segment; sequence FSTCSSHMLAVVIFFGSAAFM. Residues 259–271 are Extracellular-facing; that stretch reads YLQPSSISSMDQG. The helical transmembrane segment at 272–292 threads the bilayer; the sequence is KVSSVFYTIIVPMLNPLIYSL. The Cytoplasmic portion of the chain corresponds to 293–311; that stretch reads RNKDVHVSLKKMLQRRTLL.

It belongs to the G-protein coupled receptor 1 family.

The protein resides in the cell membrane. Odorant receptor. The chain is Olfactory receptor 8G1 (OR8G1) from Homo sapiens (Human).